A 305-amino-acid polypeptide reads, in one-letter code: Succinate--CoA ligase [ADP-forming] subunit alpha (305 aa).

CoA contacts are provided by residues 17–20 (TGKE), Lys-43, and 96–98 (ITE). Residue Tyr-161 participates in substrate binding. The active-site Tele-phosphohistidine intermediate is the His-249.

Belongs to the succinate/malate CoA ligase alpha subunit family. As to quaternary structure, heterotetramer of two alpha and two beta subunits.

It carries out the reaction succinate + ATP + CoA = succinyl-CoA + ADP + phosphate. The enzyme catalyses GTP + succinate + CoA = succinyl-CoA + GDP + phosphate. It functions in the pathway carbohydrate metabolism; tricarboxylic acid cycle; succinate from succinyl-CoA (ligase route): step 1/1. Its function is as follows. Succinyl-CoA synthetase functions in the citric acid cycle (TCA), coupling the hydrolysis of succinyl-CoA to the synthesis of either ATP or GTP and thus represents the only step of substrate-level phosphorylation in the TCA. The alpha subunit of the enzyme binds the substrates coenzyme A and phosphate, while succinate binding and nucleotide specificity is provided by the beta subunit. The sequence is that of Succinate--CoA ligase [ADP-forming] subunit alpha from Aquifex aeolicus (strain VF5).